Consider the following 768-residue polypeptide: Vacuolar basic amino acid transporter 4 (768 aa).

Over 1-252 the chain is Cytoplasmic; it reads MGKKDRQRKK…HDLTRRRIFS (252 aa). Positions 9 to 40 form a coiled coil; it reads KKLREFAKLKNRQRNLRKSVQTLKNEVQREAK. A disordered region spans residues 34–172; that stretch reads EVQREAKVPR…ELPVSSSNSF (139 aa). A phosphoserine mark is found at serine 62, serine 99, and serine 106. A compositionally biased stretch (basic and acidic residues) spans 110 to 121; that stretch reads KPADKANEDDLK. The segment covering 132-159 has biased composition (polar residues); sequence SALQSSITDFSDRSVSPLQSITSCNTPM. Phosphoserine is present on residues serine 160 and serine 192. The helical transmembrane segment at 253-273 threads the bilayer; it reads SCMCTYLFFIAMDSSIILVIA. Residues 274–282 lie on the Vacuolar side of the membrane; the sequence is SKIASEFHE. A helical transmembrane segment spans residues 283 to 305; the sequence is LWRLSLVISAYLLSNAIGQLVFL. At 306 to 311 the chain is on the cytoplasmic side; it reads KLSLIS. The chain crosses the membrane as a helical span at residues 312-331; the sequence is SVKLLLCIAQFSFILGGYLS. Residues 332–334 lie on the Vacuolar side of the membrane; that stretch reads WSS. The chain crosses the membrane as a helical span at residues 335-357; the sequence is AHFWTFIFARCVTGFGGGSLIAL. Residues 358–375 are Cytoplasmic-facing; it reads KSTIMNRFSQKNDSRYSL. The chain crosses the membrane as a helical span at residues 376–396; that stretch reads SASMITFAMGVVIGPFMMNLF. Residues 397 to 406 are Vacuolar-facing; that stretch reads DSSHGSGWRN. A helical transmembrane segment spans residues 407–427; that stretch reads AFLIPVPFCLVNASIMLADMY. Over 428 to 447 the chain is Cytoplasmic; it reads SVKSTLYGRPTPTLWKRFKN. Residues 448–468 form a helical membrane-spanning segment; that stretch reads TLLSPDLYEILTLTLFLLCFV. The Vacuolar segment spans residues 469-481; sequence QVTSLDLTGLKNN. Residue asparagine 480 is glycosylated (N-linked (GlcNAc...) asparagine). The helical transmembrane segment at 482–502 threads the bilayer; sequence TMIQALLFSVIIVCGILFFLI. Topologically, residues 503 to 522 are cytoplasmic; the sequence is ETSDTYMNSVISMSLQGDKR. Residues 523–543 form a helical membrane-spanning segment; sequence LIWTMIGISFCFAALMCIIPF. The Vacuolar portion of the chain corresponds to 544 to 562; sequence GTTYFIIVLNLSTLQLAER. Residue asparagine 553 is glycosylated (N-linked (GlcNAc...) asparagine). A helical membrane pass occupies residues 563–583; sequence LSPFFFSIVLGYFSVSYFWKS. Residues 584–587 are Cytoplasmic-facing; that stretch reads KGQN. The helical transmembrane segment at 588–608 threads the bilayer; sequence FLLKFVLSGATLLLYVALMGV. Residues 609–617 are Vacuolar-facing; it reads SLNLPVWKQ. The helical transmembrane segment at 618–638 threads the bilayer; sequence YICLSLPFLGSSMILTLLSNL. The Cytoplasmic portion of the chain corresponds to 639–653; it reads YHEYHEQRKSPISGS. The chain crosses the membrane as a helical span at residues 654–674; it reads IVYCFGAVGGTVGISLGGYVF. Residues 675-734 lie on the Vacuolar side of the membrane; it reads HKTLIKLMHEKVMPFSKQGYLKKDLLKIIKHATESSDWVHESAPKFVFQTLIECYLQACR. The helical transmembrane segment at 735 to 755 threads the bilayer; it reads NVFKLSTLFFTITVVAIFIFN. The Cytoplasmic segment spans residues 756 to 768; the sequence is RIHCRSQNCLSLS.

It belongs to the major facilitator superfamily.

Its subcellular location is the vacuole membrane. Its function is as follows. Transporter required for vacuolar uptake of basic amino acids. The chain is Vacuolar basic amino acid transporter 4 (VBA4) from Saccharomyces cerevisiae (strain ATCC 204508 / S288c) (Baker's yeast).